The following is a 61-amino-acid chain: Beta-defensin 13 (61 aa).

An N-terminal signal peptide occupies residues 1–21; it reads MRLLYLLFAAVMLLFLQAVPA. A 1,2-diacyl-sn-glycero-3-phosphate contacts are provided by S24, R40, H44, N51, N53, G54, H58, and K61. Intrachain disulfides connect C31/C59, C38/C52, and C42/C60.

It belongs to the beta-defensin family. Monomeric. Forms multimeric, probably including tetrameric, complexes in the presence of phospholipid phosphatidic acid.

Its subcellular location is the secreted. Functionally, exhibits antimicrobial activity against fungi. Antimicrobial activity in a pH-dependent manner against the yeast C.albicans; activity is salt tolerant and retains antifungal activity in NaCl concentrations of 100mM. Permeabilizes C.albicans cell membranes via targeting plasma membrane phospholipid phosphatidic acid. The chain is Beta-defensin 13 from Crocodylus porosus (Saltwater crocodile).